Reading from the N-terminus, the 189-residue chain is Chitin synthase 1 (189 aa).

This sequence belongs to the chitin synthase family. Class I subfamily.

The protein resides in the cell membrane. It catalyses the reaction [(1-&gt;4)-N-acetyl-beta-D-glucosaminyl](n) + UDP-N-acetyl-alpha-D-glucosamine = [(1-&gt;4)-N-acetyl-beta-D-glucosaminyl](n+1) + UDP + H(+). Polymerizes chitin, a structural polymer of the cell wall and septum, by transferring the sugar moiety of UDP-GlcNAc to the non-reducing end of the growing chitin polymer. This is Chitin synthase 1 (CHS1) from Ajellomyces capsulatus (Darling's disease fungus).